Here is a 121-residue protein sequence, read N- to C-terminus: Ribosome-binding factor A (121 aa).

It belongs to the RbfA family. In terms of assembly, monomer. Binds 30S ribosomal subunits, but not 50S ribosomal subunits or 70S ribosomes.

It is found in the cytoplasm. One of several proteins that assist in the late maturation steps of the functional core of the 30S ribosomal subunit. Associates with free 30S ribosomal subunits (but not with 30S subunits that are part of 70S ribosomes or polysomes). Required for efficient processing of 16S rRNA. May interact with the 5'-terminal helix region of 16S rRNA. This is Ribosome-binding factor A from Heliobacterium modesticaldum (strain ATCC 51547 / Ice1).